We begin with the raw amino-acid sequence, 481 residues long: Aspartyl/glutamyl-tRNA(Asn/Gln) amidotransferase subunit B (481 aa).

Belongs to the GatB/GatE family. GatB subfamily. In terms of assembly, heterotrimer of A, B and C subunits.

The catalysed reaction is L-glutamyl-tRNA(Gln) + L-glutamine + ATP + H2O = L-glutaminyl-tRNA(Gln) + L-glutamate + ADP + phosphate + H(+). It carries out the reaction L-aspartyl-tRNA(Asn) + L-glutamine + ATP + H2O = L-asparaginyl-tRNA(Asn) + L-glutamate + ADP + phosphate + 2 H(+). Allows the formation of correctly charged Asn-tRNA(Asn) or Gln-tRNA(Gln) through the transamidation of misacylated Asp-tRNA(Asn) or Glu-tRNA(Gln) in organisms which lack either or both of asparaginyl-tRNA or glutaminyl-tRNA synthetases. The reaction takes place in the presence of glutamine and ATP through an activated phospho-Asp-tRNA(Asn) or phospho-Glu-tRNA(Gln). This Prosthecochloris aestuarii (strain DSM 271 / SK 413) protein is Aspartyl/glutamyl-tRNA(Asn/Gln) amidotransferase subunit B.